A 133-amino-acid polypeptide reads, in one-letter code: Ribonuclease P protein component (133 aa).

This sequence belongs to the RnpA family. In terms of assembly, consists of a catalytic RNA component (M1 or rnpB) and a protein subunit.

The enzyme catalyses Endonucleolytic cleavage of RNA, removing 5'-extranucleotides from tRNA precursor.. RNaseP catalyzes the removal of the 5'-leader sequence from pre-tRNA to produce the mature 5'-terminus. It can also cleave other RNA substrates such as 4.5S RNA. The protein component plays an auxiliary but essential role in vivo by binding to the 5'-leader sequence and broadening the substrate specificity of the ribozyme. This Corynebacterium glutamicum (strain R) protein is Ribonuclease P protein component.